The chain runs to 410 residues: Transcription factor PHYTOCHROME INTERACTING FACTOR-LIKE 13 (410 aa).

A compositionally biased stretch (low complexity) spans 82 to 92 (AAAAAGPSSHH). Disordered stretches follow at residues 82-110 (AAAA…MRSG) and 137-225 (CRDA…AEVH). Residues 93-104 (APPPDLPPPAAR) are compositionally biased toward pro residues. Residues 187-197 (GREDSDSRSED) show a composition bias toward basic and acidic residues. The span at 209 to 219 (SSRRYGSKRRT) shows a compositional bias: basic residues. Positions 220 to 233 (RAAEVHNLSERRRR) are basic motif. A bHLH domain is found at 220-269 (RAAEVHNLSERRRRDRINEKMRALQELIPHCNKTDKASILDEAIEYLKSL). The tract at residues 234 to 269 (DRINEKMRALQELIPHCNKTDKASILDEAIEYLKSL) is helix-loop-helix motif. The tract at residues 357–410 (PFLHPDGWQTVPPQVSGPYASGPQVAQQNQIPKASASTVLPNSGAEQPPTSDGI) is disordered. Polar residues predominate over residues 380 to 410 (QVAQQNQIPKASASTVLPNSGAEQPPTSDGI).

It belongs to the bHLH protein family. Interacts with PRR1. Interacts with LF. In terms of tissue distribution, highly expressed in the node portions of the stem. Expressed in the leaves and the basal part of shoots.

It localises to the nucleus. In terms of biological role, transcription factor that may act as negative regulator of phyB-dependent light signal transduction. Transcription activator that acts as a positive regulator of internode elongation. May function via regulation of cell wall-related genes. May play a role in a drought-associated growth-restriction mechanism in response to drought stress. In Oryza sativa subsp. japonica (Rice), this protein is Transcription factor PHYTOCHROME INTERACTING FACTOR-LIKE 13.